Consider the following 609-residue polypeptide: 1-deoxy-D-xylulose-5-phosphate synthase (609 aa).

Residues His77 and 118-120 (GHS) each bind thiamine diphosphate. Asp149 serves as a coordination point for Mg(2+). Thiamine diphosphate is bound by residues 150-151 (GA), Asn178, Tyr259, and Glu342. Asn178 contacts Mg(2+).

The protein belongs to the transketolase family. DXPS subfamily. In terms of assembly, homodimer. The cofactor is Mg(2+). Thiamine diphosphate is required as a cofactor.

It carries out the reaction D-glyceraldehyde 3-phosphate + pyruvate + H(+) = 1-deoxy-D-xylulose 5-phosphate + CO2. The protein operates within metabolic intermediate biosynthesis; 1-deoxy-D-xylulose 5-phosphate biosynthesis; 1-deoxy-D-xylulose 5-phosphate from D-glyceraldehyde 3-phosphate and pyruvate: step 1/1. Functionally, catalyzes the acyloin condensation reaction between C atoms 2 and 3 of pyruvate and glyceraldehyde 3-phosphate to yield 1-deoxy-D-xylulose-5-phosphate (DXP). The protein is 1-deoxy-D-xylulose-5-phosphate synthase of Listeria monocytogenes serotype 4b (strain CLIP80459).